Consider the following 276-residue polypeptide: ATP synthase subunit delta (276 aa).

The protein belongs to the ATPase delta chain family. F-type ATPases have 2 components, F(1) - the catalytic core - and F(0) - the membrane proton channel. F(1) has five subunits: alpha(3), beta(3), gamma(1), delta(1), epsilon(1). F(0) has three main subunits: a(1), b(2) and c(10-14). The alpha and beta chains form an alternating ring which encloses part of the gamma chain. F(1) is attached to F(0) by a central stalk formed by the gamma and epsilon chains, while a peripheral stalk is formed by the delta and b chains.

The protein localises to the cell membrane. Its function is as follows. F(1)F(0) ATP synthase produces ATP from ADP in the presence of a proton or sodium gradient. F-type ATPases consist of two structural domains, F(1) containing the extramembraneous catalytic core and F(0) containing the membrane proton channel, linked together by a central stalk and a peripheral stalk. During catalysis, ATP synthesis in the catalytic domain of F(1) is coupled via a rotary mechanism of the central stalk subunits to proton translocation. This protein is part of the stalk that links CF(0) to CF(1). It either transmits conformational changes from CF(0) to CF(1) or is implicated in proton conduction. This Frankia casuarinae (strain DSM 45818 / CECT 9043 / HFP020203 / CcI3) protein is ATP synthase subunit delta.